The sequence spans 219 residues: NADH-quinone oxidoreductase subunit C (219 aa).

Belongs to the complex I 30 kDa subunit family. In terms of assembly, NDH-1 is composed of 14 different subunits. Subunits NuoB, C, D, E, F, and G constitute the peripheral sector of the complex.

The protein resides in the cell inner membrane. It carries out the reaction a quinone + NADH + 5 H(+)(in) = a quinol + NAD(+) + 4 H(+)(out). Functionally, NDH-1 shuttles electrons from NADH, via FMN and iron-sulfur (Fe-S) centers, to quinones in the respiratory chain. The immediate electron acceptor for the enzyme in this species is believed to be ubiquinone. Couples the redox reaction to proton translocation (for every two electrons transferred, four hydrogen ions are translocated across the cytoplasmic membrane), and thus conserves the redox energy in a proton gradient. The polypeptide is NADH-quinone oxidoreductase subunit C (Methylorubrum extorquens (strain PA1) (Methylobacterium extorquens)).